Here is a 375-residue protein sequence, read N- to C-terminus: Succinyl-diaminopimelate desuccinylase (375 aa).

Histidine 66 contributes to the Zn(2+) binding site. The active site involves aspartate 68. Aspartate 99 provides a ligand contact to Zn(2+). Glutamate 133 functions as the Proton acceptor in the catalytic mechanism. Residues glutamate 134, glutamate 162, and histidine 348 each coordinate Zn(2+).

This sequence belongs to the peptidase M20A family. DapE subfamily. As to quaternary structure, homodimer. It depends on Zn(2+) as a cofactor. The cofactor is Co(2+).

It carries out the reaction N-succinyl-(2S,6S)-2,6-diaminopimelate + H2O = (2S,6S)-2,6-diaminopimelate + succinate. The protein operates within amino-acid biosynthesis; L-lysine biosynthesis via DAP pathway; LL-2,6-diaminopimelate from (S)-tetrahydrodipicolinate (succinylase route): step 3/3. Functionally, catalyzes the hydrolysis of N-succinyl-L,L-diaminopimelic acid (SDAP), forming succinate and LL-2,6-diaminopimelate (DAP), an intermediate involved in the bacterial biosynthesis of lysine and meso-diaminopimelic acid, an essential component of bacterial cell walls. In Buchnera aphidicola subsp. Acyrthosiphon pisum (strain APS) (Acyrthosiphon pisum symbiotic bacterium), this protein is Succinyl-diaminopimelate desuccinylase.